We begin with the raw amino-acid sequence, 770 residues long: Glutamate carboxypeptidase 2 homolog (770 aa).

The Cytoplasmic segment spans residues 1 to 19 (MPYVGVGAQKASTNLTGGP). Residues 20-40 (MMKAYAFVLAFFLLGLGVLAL) form a helical; Signal-anchor for type II membrane protein membrane-spanning segment. Residues 41-770 (GKHHSGRRFN…CVVNTLRDVI (730 aa)) lie on the Extracellular side of the membrane. N-linked (GlcNAc...) asparagine glycans are attached at residues N175 and N337. The catalytic stretch occupies residues 282–597 (SKKELFKGRT…QYWAELAKTF (316 aa)). Zn(2+) is bound by residues H387 and D397. Residue N417 is glycosylated (N-linked (GlcNAc...) asparagine). The active-site Nucleophile is the E435. Residues E436 and D464 each contribute to the Zn(2+) site. N469 and N551 each carry an N-linked (GlcNAc...) asparagine glycan. H562 serves as a coordination point for Zn(2+). 2 N-linked (GlcNAc...) asparagine glycosylation sites follow: N606 and N630.

It belongs to the peptidase M28 family. M28B subfamily. Zn(2+) serves as cofactor.

It is found in the membrane. The catalysed reaction is Release of an unsubstituted, C-terminal glutamyl residue, typically from Ac-Asp-Glu or folylpoly-gamma-glutamates.. The chain is Glutamate carboxypeptidase 2 homolog from Caenorhabditis briggsae.